Here is a 682-residue protein sequence, read N- to C-terminus: Methionine--tRNA ligase (682 aa).

Positions 15 to 25 (PYANGAIHLGH) match the 'HIGH' region motif. Positions 146, 149, 159, and 162 each coordinate Zn(2+). Residues 331 to 335 (KMSKS) carry the 'KMSKS' region motif. Lys-334 contacts ATP. The tRNA-binding domain occupies 580–682 (DFAKLDMRVA…NGVTAGMQVK (103 aa)).

This sequence belongs to the class-I aminoacyl-tRNA synthetase family. MetG type 1 subfamily. As to quaternary structure, homodimer. Requires Zn(2+) as cofactor.

The protein localises to the cytoplasm. The enzyme catalyses tRNA(Met) + L-methionine + ATP = L-methionyl-tRNA(Met) + AMP + diphosphate. In terms of biological role, is required not only for elongation of protein synthesis but also for the initiation of all mRNA translation through initiator tRNA(fMet) aminoacylation. The polypeptide is Methionine--tRNA ligase (Haemophilus influenzae (strain PittGG)).